The sequence spans 320 residues: GTP 3',8-cyclase (320 aa).

In terms of domain architecture, Radical SAM core spans 5-225; the sequence is QFGRKINYLR…IQLIKKDEKA (221 aa). Arg14 lines the GTP pocket. Residues Cys21 and Cys25 each contribute to the [4Fe-4S] cluster site. S-adenosyl-L-methionine is bound at residue Tyr27. A [4Fe-4S] cluster-binding site is contributed by Cys28. Residue Arg64 participates in GTP binding. Gly68 is a binding site for S-adenosyl-L-methionine. GTP is bound at residue Thr95. Ser119 is an S-adenosyl-L-methionine binding site. Position 155 (Lys155) interacts with GTP. Met189 provides a ligand contact to S-adenosyl-L-methionine. 2 residues coordinate [4Fe-4S] cluster: Cys248 and Cys251. A GTP-binding site is contributed by 253-255; the sequence is RIR. [4Fe-4S] cluster is bound at residue Cys265.

This sequence belongs to the radical SAM superfamily. MoaA family. Monomer and homodimer. [4Fe-4S] cluster is required as a cofactor.

It carries out the reaction GTP + AH2 + S-adenosyl-L-methionine = (8S)-3',8-cyclo-7,8-dihydroguanosine 5'-triphosphate + 5'-deoxyadenosine + L-methionine + A + H(+). Its pathway is cofactor biosynthesis; molybdopterin biosynthesis. Functionally, catalyzes the cyclization of GTP to (8S)-3',8-cyclo-7,8-dihydroguanosine 5'-triphosphate. This chain is GTP 3',8-cyclase, found in Campylobacter jejuni (strain RM1221).